The sequence spans 54 residues: Large ribosomal subunit protein bL33A (54 aa).

Belongs to the bacterial ribosomal protein bL33 family.

The protein is Large ribosomal subunit protein bL33A (rpmG1) of Mycobacterium bovis (strain ATCC BAA-935 / AF2122/97).